The chain runs to 196 residues: HTH-type transcriptional regulator Hpr (196 aa).

An HTH marR-type domain is found at 13-157 (SIVFSHKMAL…LICIVRHIYG (145 aa)). A DNA-binding region (H-T-H motif) is located at residues 63–86 (ISDIASHGVMHVSTAFNFSKKLEA).

As to quaternary structure, homodimer.

In terms of biological role, negative regulator of protease production and sporulation. This is HTH-type transcriptional regulator Hpr from Shouchella clausii (strain KSM-K16) (Alkalihalobacillus clausii).